A 464-amino-acid chain; its full sequence is V-type ATP synthase beta chain (464 aa).

It belongs to the ATPase alpha/beta chains family.

In terms of biological role, produces ATP from ADP in the presence of a proton gradient across the membrane. The V-type beta chain is a regulatory subunit. The protein is V-type ATP synthase beta chain of Streptococcus sanguinis (strain SK36).